The chain runs to 27 residues: SFREQCVPGREITYECLNACAEYAVRQ.

This sequence belongs to the protease inhibitor I6 (cereal trypsin/alpha-amylase inhibitor) family.

The protein localises to the secreted. The chain is Allergen C-C from Triticum aestivum (Wheat).